Reading from the N-terminus, the 333-residue chain is Alpha-N-acetylgalactosaminide alpha-2,6-sialyltransferase 6 (333 aa).

A compositionally biased stretch (polar residues) spans 1-12 (MACSRPPSQCEP). Positions 1 to 26 (MACSRPPSQCEPTSLPPGPPAGRRHL) are disordered. Over 1 to 43 (MACSRPPSQCEPTSLPPGPPAGRRHLPLSRRRREMSSNKEQRS) the chain is Cytoplasmic. Residues 44 to 64 (AVFVILFALITILILYSSNSA) form a helical; Signal-anchor for type II membrane protein membrane-spanning segment. Residues 65–333 (NEVFHYGSLR…GITFSHPSWT (269 aa)) are Lumenal-facing. An N-linked (GlcNAc...) asparagine glycan is attached at Asn98. Residues Cys108 and Cys256 are joined by a disulfide bond.

Belongs to the glycosyltransferase 29 family. As to expression, expressed in kidney, in proximal tubule epithelial cells. Expressed in colon cell lines.

It localises to the golgi apparatus membrane. The catalysed reaction is a ganglioside GM1b (d18:1(4E)) + CMP-N-acetyl-beta-neuraminate = a ganglioside GD1alpha (d18:1(4E)) + CMP + H(+). The enzyme catalyses N-acetyl-alpha-neuraminosyl-(2-&gt;3)-beta-D-galactosyl-(1-&gt;3)-N-acetyl-beta-D-glucosaminyl-(1-&gt;3)-beta-D-galactosyl-(1-&gt;4)-beta-D-glucosyl-(1&lt;-&gt;1')-N-acyl-sphing-4-enine + CMP-N-acetyl-beta-neuraminate = N-acetyl-alpha-neuraminosyl-(2-&gt;3)-beta-D-galactosyl-(1-&gt;3)-[N-acetyl-alpha-neuraminosyl-(2-&gt;6)]-N-acetyl-beta-D-glucosaminyl-(1-&gt;3)-beta-D-galactosyl-(1-&gt;4)-beta-D-glucosyl-(1&lt;-&gt;1')-N-acyl-sphing-4-enine + CMP + H(+). It carries out the reaction a globoside MSGG + CMP-N-acetyl-beta-neuraminate = a globoside DSGG + CMP + H(+). It catalyses the reaction a ganglioside GD1a (d18:1(4E)) + CMP-N-acetyl-beta-neuraminate = a ganglioside GT1aalpha (d18:1(4E)) + CMP + H(+). The catalysed reaction is a ganglioside GT1b (d18:1(4E)) + CMP-N-acetyl-beta-neuraminate = a ganglioside GQ1balpha (d18:1(4E)) + CMP + H(+). The enzyme catalyses 3-O-[alpha-Neu5Ac-(2-&gt;3)-beta-D-Gal-(1-&gt;3)-alpha-D-GalNAc]-L-Ser-[protein] + CMP-N-acetyl-beta-neuraminate = a 3-O-{alpha-Neu5Ac-(2-&gt;3)-beta-D-Gal-(1-&gt;3)-[alpha-Neu5Ac-(2-&gt;6)]-alpha-D-GalNAc}-L-seryl-[protein] + CMP + H(+). It carries out the reaction 3-O-[alpha-Neu5Ac-(2-&gt;3)-beta-D-Gal-(1-&gt;3)-alpha-D-GalNAc]-L-Thr-[protein] + CMP-N-acetyl-beta-neuraminate = a 3-O-{alpha-Neu5Ac-(2-&gt;3)-beta-D-Gal-(1-&gt;3)-[alpha-Neu5Ac-(2-&gt;6)]-alpha-D-GalNAc}-L-threonyl-[protein] + CMP + H(+). Functionally, transfers the sialyl group (N-acetyl-alpha-neuraminyl or NeuAc) from CMP-NeuAc onto glycoproteins and glycolipids, forming an alpha-2,6-linkage. Produces branched type disialyl structures by transfer of a sialyl group onto the GalNAc or GlcNAc residue inside backbone core chains having a terminal sialic acid with an alpha-2,3-linkage on Gal. ST6GalNAcVI prefers glycolipids to glycoproteins, predominantly catalyzing the biosynthesis of ganglioside GD1alpha from GM1b. Besides GMb1, MSGG and other glycolipids, it shows activity towards sialyl Lc4Cer generating disialyl Lc4Cer, which can lead to the synthesis of disialyl Lewis a (Le(a)), suggested to be a cancer-associated antigen. Also has activity toward GD1a and GT1b, and can generate DSGG (disialylgalactosylgloboside) from MSGG (monosialylgalactosylgloboside). In Homo sapiens (Human), this protein is Alpha-N-acetylgalactosaminide alpha-2,6-sialyltransferase 6 (ST6GALNAC6).